We begin with the raw amino-acid sequence, 179 residues long: Segregation and condensation protein B (179 aa).

It belongs to the ScpB family. Homodimer. Homodimerization may be required to stabilize the binding of ScpA to the Smc head domains. Component of a cohesin-like complex composed of ScpA, ScpB and the Smc homodimer, in which ScpA and ScpB bind to the head domain of Smc. The presence of the three proteins is required for the association of the complex with DNA.

It is found in the cytoplasm. In terms of biological role, participates in chromosomal partition during cell division. May act via the formation of a condensin-like complex containing Smc and ScpA that pull DNA away from mid-cell into both cell halves. This is Segregation and condensation protein B from Clostridioides difficile (strain 630) (Peptoclostridium difficile).